The following is a 394-amino-acid chain: ATP phosphoribosyltransferase regulatory subunit (394 aa).

The protein belongs to the class-II aminoacyl-tRNA synthetase family. HisZ subfamily. Heteromultimer composed of HisG and HisZ subunits.

The protein resides in the cytoplasm. It functions in the pathway amino-acid biosynthesis; L-histidine biosynthesis; L-histidine from 5-phospho-alpha-D-ribose 1-diphosphate: step 1/9. In terms of biological role, required for the first step of histidine biosynthesis. May allow the feedback regulation of ATP phosphoribosyltransferase activity by histidine. The protein is ATP phosphoribosyltransferase regulatory subunit of Pseudomonas aeruginosa (strain LESB58).